The primary structure comprises 96 residues: Cytochrome c2 iso-2 (96 aa).

Residues cysteine 10, cysteine 13, histidine 14, and methionine 75 each coordinate heme c.

Belongs to the cytochrome c family. Post-translationally, binds 1 heme c group covalently per subunit.

In terms of biological role, cytochrome c2 is found mainly in purple, non-sulfur, photosynthetic bacteria where it functions as the electron donor to the oxidized bacteriochlorophyll in the photophosphorylation pathway. However, it may also have a role in the respiratory chain and is found in some non-photosynthetic bacteria. The polypeptide is Cytochrome c2 iso-2 (Magnetospirillum fulvum (Rhodospirillum fulvum)).